A 153-amino-acid polypeptide reads, in one-letter code: 6,7-dimethyl-8-ribityllumazine synthase (153 aa).

Residues phenylalanine 21, 55-57 (AFE), and 79-81 (TVI) each bind 5-amino-6-(D-ribitylamino)uracil. 84 to 85 (AT) lines the (2S)-2-hydroxy-3-oxobutyl phosphate pocket. The active-site Proton donor is histidine 87. Phenylalanine 112 is a binding site for 5-amino-6-(D-ribitylamino)uracil. Arginine 126 is a (2S)-2-hydroxy-3-oxobutyl phosphate binding site.

The protein belongs to the DMRL synthase family. Forms an icosahedral capsid composed of 60 subunits, arranged as a dodecamer of pentamers.

It catalyses the reaction (2S)-2-hydroxy-3-oxobutyl phosphate + 5-amino-6-(D-ribitylamino)uracil = 6,7-dimethyl-8-(1-D-ribityl)lumazine + phosphate + 2 H2O + H(+). The protein operates within cofactor biosynthesis; riboflavin biosynthesis; riboflavin from 2-hydroxy-3-oxobutyl phosphate and 5-amino-6-(D-ribitylamino)uracil: step 1/2. Catalyzes the formation of 6,7-dimethyl-8-ribityllumazine by condensation of 5-amino-6-(D-ribitylamino)uracil with 3,4-dihydroxy-2-butanone 4-phosphate. This is the penultimate step in the biosynthesis of riboflavin. The polypeptide is 6,7-dimethyl-8-ribityllumazine synthase (Bacillus cereus (strain B4264)).